Here is a 259-residue protein sequence, read N- to C-terminus: MAVGKNKRLSKGKKGIKKKVVDPFTRKEWYDIKAPSFFENRNAGKTLVNRTQGLKNANDSLKGRVLELSLADLNNDQEQSFRKIKLRVEDVAGKSCLTSFYGMDFTTDKLRSIVRKWQSLVEAHVDVKTTDGYVLRLFAIGFTKRQSNQVKKTTYAQSSQLKEIRAKMVEIMRREAEGSDLKELVQKFVPESIGREIEKAAKGIYPLHNVYVRKAKIVKTPKIDMSKLLESHGEAMDANTGSKVVKSGEFVEPEILESV.

N-acetylalanine; partial is present on Ala2.

Belongs to the eukaryotic ribosomal protein eS1 family. Component of the small ribosomal subunit. Mature ribosomes consist of a small (40S) and a large (60S) subunit. The 40S subunit contains about 33 different proteins and 1 molecule of RNA (18S). The 60S subunit contains about 49 different proteins and 3 molecules of RNA (25S, 5.8S and 5S).

It localises to the cytoplasm. The polypeptide is Small ribosomal subunit protein eS1 (Cryptococcus neoformans var. neoformans serotype D (strain B-3501A) (Filobasidiella neoformans)).